A 226-amino-acid polypeptide reads, in one-letter code: 7-cyano-7-deazaguanine synthase (226 aa).

ATP is bound at residue leucine 10–alanine 20. Residues cysteine 191, cysteine 199, cysteine 202, and cysteine 205 each contribute to the Zn(2+) site.

This sequence belongs to the QueC family. Zn(2+) serves as cofactor.

It carries out the reaction 7-carboxy-7-deazaguanine + NH4(+) + ATP = 7-cyano-7-deazaguanine + ADP + phosphate + H2O + H(+). It participates in purine metabolism; 7-cyano-7-deazaguanine biosynthesis. Its function is as follows. Catalyzes the ATP-dependent conversion of 7-carboxy-7-deazaguanine (CDG) to 7-cyano-7-deazaguanine (preQ(0)). The protein is 7-cyano-7-deazaguanine synthase of Prochlorococcus marinus (strain MIT 9303).